Here is a 356-residue protein sequence, read N- to C-terminus: 3-dehydroquinate synthase (356 aa).

Residues 71-76 (EGEASK), 105-109 (GVTGD), 129-130 (TS), K142, and K151 contribute to the NAD(+) site. The Zn(2+) site is built by E184, H247, and H264.

The protein belongs to the sugar phosphate cyclases superfamily. Dehydroquinate synthase family. Requires Co(2+) as cofactor. It depends on Zn(2+) as a cofactor. NAD(+) is required as a cofactor.

The protein localises to the cytoplasm. It carries out the reaction 7-phospho-2-dehydro-3-deoxy-D-arabino-heptonate = 3-dehydroquinate + phosphate. The protein operates within metabolic intermediate biosynthesis; chorismate biosynthesis; chorismate from D-erythrose 4-phosphate and phosphoenolpyruvate: step 2/7. Its function is as follows. Catalyzes the conversion of 3-deoxy-D-arabino-heptulosonate 7-phosphate (DAHP) to dehydroquinate (DHQ). This is 3-dehydroquinate synthase from Lactococcus lactis subsp. cremoris (strain SK11).